A 327-amino-acid chain; its full sequence is uncharacterized protein (327 aa).

Residues 12–79 (KRLDEFLAKE…LKKELDLEIE (68 aa)) enclose the S4 RNA-binding domain. Aspartate 136 is an active-site residue.

This sequence belongs to the pseudouridine synthase RluA family.

It catalyses the reaction a uridine in RNA = a pseudouridine in RNA. This is an uncharacterized protein from Helicobacter pylori (strain ATCC 700392 / 26695) (Campylobacter pylori).